A 239-amino-acid chain; its full sequence is Hydroxyacylglutathione hydrolase (239 aa).

Zn(2+) is bound by residues His-54, His-56, Asp-58, His-59, His-112, Asp-131, and His-169.

This sequence belongs to the metallo-beta-lactamase superfamily. Glyoxalase II family. Monomer. It depends on Zn(2+) as a cofactor.

It carries out the reaction an S-(2-hydroxyacyl)glutathione + H2O = a 2-hydroxy carboxylate + glutathione + H(+). It participates in secondary metabolite metabolism; methylglyoxal degradation; (R)-lactate from methylglyoxal: step 2/2. In terms of biological role, thiolesterase that catalyzes the hydrolysis of S-D-lactoyl-glutathione to form glutathione and D-lactic acid. The protein is Hydroxyacylglutathione hydrolase of Pelagibacter ubique (strain HTCC1062).